The following is a 1049-amino-acid chain: Solvent-resistant pump membrane transporter SrpB (1049 aa).

Transmembrane regions (helical) follow at residues 10-30 (IFAW…LAKM), 339-359 (SVVH…YLFL), 366-386 (LIPT…LPYF), 392-412 (VLTM…AIVV), 440-460 (GALV…AFFG), 470-490 (FAIT…VFTP), 542-562 (LAFL…PKAF), 871-891 (APLL…ALYE), 895-915 (VPVS…LATL), 927-947 (VGLM…VEFA), 973-993 (ILMT…ASGA), and 1008-1028 (GMIT…VVVV).

This sequence belongs to the resistance-nodulation-cell division (RND) (TC 2.A.6) family.

The protein resides in the cell inner membrane. In terms of biological role, the inner membrane transporter component of an organic solvent efflux pump. Involved in export of a number of low log POW compounds including hexane (log POW 3.5), toluene (log POW 2.5) and dimethylphthalate (log POW 2.3). The solvent resistance phenotype has been postulated to depend on the operon expression level. The sequence is that of Solvent-resistant pump membrane transporter SrpB (srpB) from Pseudomonas putida (Arthrobacter siderocapsulatus).